The primary structure comprises 251 residues: MHILLTNDDGYFAPGLQTLYTTLAEAGYDVFIVAPDSQKSATGHSITLFEPLFITKHSLDRGTGYAVSGKPADCVKLAIQGSIIPKPDLVISGINNGPNLGTDVFYSGTVSAAMEGVLLGVPAIAVSLASFSAVDYKPAAQFVALSLPKLRLGPGLININIPPLPEKEWKGVRVTKLGKAVYENVFEHRQAPYGRDYYWQAGTVSPEVDQETDLYAVQEGYVSITPMHSDLTDYIKLKELRQSLSLENPNK.

The a divalent metal cation site is built by aspartate 8, aspartate 9, serine 40, and asparagine 95.

The protein belongs to the SurE nucleotidase family. The cofactor is a divalent metal cation.

The protein resides in the cytoplasm. It carries out the reaction a ribonucleoside 5'-phosphate + H2O = a ribonucleoside + phosphate. Nucleotidase that shows phosphatase activity on nucleoside 5'-monophosphates. The chain is 5'-nucleotidase SurE from Desulfitobacterium hafniense (strain DSM 10664 / DCB-2).